The following is a 296-amino-acid chain: Porphobilinogen deaminase (296 aa).

Cysteine 235 is subject to S-(dipyrrolylmethanemethyl)cysteine.

The protein belongs to the HMBS family. Monomer. It depends on dipyrromethane as a cofactor.

It catalyses the reaction 4 porphobilinogen + H2O = hydroxymethylbilane + 4 NH4(+). It functions in the pathway porphyrin-containing compound metabolism; protoporphyrin-IX biosynthesis; coproporphyrinogen-III from 5-aminolevulinate: step 2/4. Tetrapolymerization of the monopyrrole PBG into the hydroxymethylbilane pre-uroporphyrinogen in several discrete steps. This chain is Porphobilinogen deaminase, found in Alkaliphilus oremlandii (strain OhILAs) (Clostridium oremlandii (strain OhILAs)).